A 405-amino-acid polypeptide reads, in one-letter code: Tryptophan synthase beta chain (405 aa).

Lys98 is modified (N6-(pyridoxal phosphate)lysine).

The protein belongs to the TrpB family. Tetramer of two alpha and two beta chains. Pyridoxal 5'-phosphate is required as a cofactor.

The enzyme catalyses (1S,2R)-1-C-(indol-3-yl)glycerol 3-phosphate + L-serine = D-glyceraldehyde 3-phosphate + L-tryptophan + H2O. Its pathway is amino-acid biosynthesis; L-tryptophan biosynthesis; L-tryptophan from chorismate: step 5/5. Functionally, the beta subunit is responsible for the synthesis of L-tryptophan from indole and L-serine. This Bradyrhizobium diazoefficiens (strain JCM 10833 / BCRC 13528 / IAM 13628 / NBRC 14792 / USDA 110) protein is Tryptophan synthase beta chain.